Here is a 187-residue protein sequence, read N- to C-terminus: Ribosome maturation factor RimM (187 aa).

The PRC barrel domain maps to 95 to 178; the sequence is DEDEFFYADL…GLVEDKDESL (84 aa).

The protein belongs to the RimM family. In terms of assembly, binds ribosomal protein uS19.

The protein localises to the cytoplasm. In terms of biological role, an accessory protein needed during the final step in the assembly of 30S ribosomal subunit, possibly for assembly of the head region. Essential for efficient processing of 16S rRNA. May be needed both before and after RbfA during the maturation of 16S rRNA. It has affinity for free ribosomal 30S subunits but not for 70S ribosomes. The protein is Ribosome maturation factor RimM of Sinorhizobium fredii (strain NBRC 101917 / NGR234).